A 626-amino-acid chain; its full sequence is MTANKNQKKTYNFKSETKELLHLMIHSLYSNREIFFRELISNAADAIDKLKFNAISAPELYENDTNLYIRIFSNKNNNSLTISDNGIGMKYEDIINNLGTIAKSGTKEFIKTLNKNNKIKNDLIGQFGVGFYSSFIVSEKVIVKTRFAGLKENQGVIWTSDGKGTYEVNEINKKERGTEVTLYLTKDHYEFLETWKIQNTVSKYSDHISIPIELNTYDEKEKTYFWKQINQAEAIWTRPKSEITELQYKNFYKKIANDTNDPLTWTHNKVEGNQEYTILLFIPSKSAWDIWNRDNKHGLKLYVKRVYIMDDAEQFLPNYLRFVKGIIDSNDLPLNVSREILQDHKLVYNLKKSLTKKVLQVLHSLSQNVSKYEIFWKQFGLILKEGPAEDSENRTSISNLIRFSSLLNNTQKPTMSLENYVKNMKQNQEKIYFITADNYASAVSSPHLEFFKKKNIDVLILSDKIDEWMMNYLIEYNEKKFQSVSKDDKSIEKLVHEQNSQNETYQENMNDFLNRAKKTLSDKIKDIRFTHKLTNTPAMVITDSNEMSTQMAKLFSAAGQTVPTIKYILEINPNHLLIKKINNEKNEKKFKNWINFLFEQCLLAEKNTLDNPNKFIARINDLLINN.

The tract at residues 1-338 (MTANKNQKKT…SNDLPLNVSR (338 aa)) is a; substrate-binding. Positions 339 to 553 (EILQDHKLVY…SNEMSTQMAK (215 aa)) are b. The interval 554–626 (LFSAAGQTVP…ARINDLLINN (73 aa)) is c.

The protein belongs to the heat shock protein 90 family. In terms of assembly, homodimer.

It localises to the cytoplasm. Its function is as follows. Molecular chaperone. Has ATPase activity. The sequence is that of Chaperone protein HtpG from Buchnera aphidicola subsp. Baizongia pistaciae (strain Bp).